Here is a 116-residue protein sequence, read N- to C-terminus: Large ribosomal subunit protein bL19 (116 aa).

It belongs to the bacterial ribosomal protein bL19 family.

Functionally, this protein is located at the 30S-50S ribosomal subunit interface and may play a role in the structure and function of the aminoacyl-tRNA binding site. This is Large ribosomal subunit protein bL19 from Solidesulfovibrio magneticus (strain ATCC 700980 / DSM 13731 / RS-1) (Desulfovibrio magneticus).